A 363-amino-acid polypeptide reads, in one-letter code: Cellular tumor antigen p53 (363 aa).

A transcription activation (acidic) region spans residues 1-29 (MEPSSETGMDPPLSQETFEDLWSLLPDPL). Residues 76 to 267 (DYAGKYGLQL…RTEEDNYTKK (192 aa)) mediate DNA binding. Residues Cys-150, His-153, Cys-213, and Cys-217 each contribute to the Zn(2+) site. An interaction with DNA region spans residues 248 to 255 (RVCACPGR). Positions 257-290 (RRTEEDNYTKKRGLKPSGKRELAHPPSSEPPLPK) are disordered. The short motif at 275-292 (KRELAHPPSSEPPLPKKR) is the Bipartite nuclear localization signal element. The interval 300–331 (EEIFTLRIKGRSRYEMIKKLNDALELQESLDQ) is oligomerization. A Nuclear export signal motif is present at residues 314–325 (EMIKKLNDALEL). The interval 344–356 (EIKPKKGKKLLVK) is basic (repression of DNA-binding).

Belongs to the p53 family. Binds DNA as a homotetramer. Zn(2+) serves as cofactor. As to expression, ubiquitous.

It is found in the cytoplasm. Its subcellular location is the nucleus. Functionally, multifunctional transcription factor that induces cell cycle arrest, DNA repair or apoptosis upon binding to its target DNA sequence. Acts as a tumor suppressor in many tumor types; induces growth arrest or apoptosis depending on the physiological circumstances and cell type. Negatively regulates cell division by controlling expression of a set of genes required for this process. One of the activated genes is an inhibitor of cyclin-dependent kinases. Apoptosis induction seems to be mediated either by stimulation of BAX and FAS antigen expression, or by repression of Bcl-2 expression. This Xenopus laevis (African clawed frog) protein is Cellular tumor antigen p53 (tp53).